Reading from the N-terminus, the 1342-residue chain is DNA-directed RNA polymerase subunit beta (1342 aa).

Residues Lys1022 and Lys1200 each carry the N6-acetyllysine modification.

The protein belongs to the RNA polymerase beta chain family. The RNAP catalytic core consists of 2 alpha, 1 beta, 1 beta' and 1 omega subunit. When a sigma factor is associated with the core the holoenzyme is formed, which can initiate transcription.

It catalyses the reaction RNA(n) + a ribonucleoside 5'-triphosphate = RNA(n+1) + diphosphate. DNA-dependent RNA polymerase catalyzes the transcription of DNA into RNA using the four ribonucleoside triphosphates as substrates. In Shigella dysenteriae serotype 1 (strain Sd197), this protein is DNA-directed RNA polymerase subunit beta.